A 240-amino-acid chain; its full sequence is Glutamine amidotransferase-like protein chry6 (240 aa).

The Glutamine amidotransferase type-1 domain maps to 13-205 (NFILDDTGGR…FVASDNPVLV (193 aa)). The active-site Nucleophile is the Cys102. Residues His185 and Glu187 contribute to the active site.

Belongs to the peptidase C26 family.

It functions in the pathway pigment biosynthesis. Glutamine amidotransferase-like protein; part of the gene cluster that mediates the biosynthesis of the yellow pigment chrysogine. Pyruvic acid and anthranilic acid are likely substrates for the nonribosomal peptide synthetase chry1/NRPS14, with pyruvic acid adenylated by the first A domain and anthranilic acid by the second. If pyruvic acid and anthranilic acid are merged and released from chry1/NRPS14 by hydrolysis, a subsequent amidation would lead to 2-pyruvoylaminobenzamide. This process is probably catalyzed by the amidotransferase chry2 using glutamine as amino donor. The dehydrogenase chry5 that has a terminal berberine bridge domain for C-N cyclization could catalyze the cyclization of 2-pyruvoylaminobenzamide to yield acetyl-4(3H)-quinazolidinone. A final reduction of acetyl-4(3H)-quinazolidinone catalyzed by the oxidoreductase chry4 would result in chrysogine. The protein is Glutamine amidotransferase-like protein chry6 of Gibberella zeae (strain ATCC MYA-4620 / CBS 123657 / FGSC 9075 / NRRL 31084 / PH-1) (Wheat head blight fungus).